The primary structure comprises 223 residues: Proteasome subunit beta type-1 (223 aa).

The protein belongs to the peptidase T1B family. In terms of assembly, the 26S proteasome consists of a 20S proteasome core and two 19S regulatory subunits. The 20S proteasome core is composed of 28 subunits that are arranged in four stacked rings, resulting in a barrel-shaped structure. The two end rings are each formed by seven alpha subunits, and the two central rings are each formed by seven beta subunits. The catalytic chamber with the active sites is on the inside of the barrel.

It localises to the cytoplasm. It is found in the nucleus. Non-catalytic component of the proteasome, a multicatalytic proteinase complex which is characterized by its ability to cleave peptides with Arg, Phe, Tyr, Leu, and Glu adjacent to the leaving group at neutral or slightly basic pH. The proteasome has an ATP-dependent proteolytic activity. The polypeptide is Proteasome subunit beta type-1 (PBF1) (Petunia hybrida (Petunia)).